A 141-amino-acid chain; its full sequence is Thioredoxin-like protein SkfH (141 aa).

A Thioredoxin domain is found at Lys2–Leu141. The cysteines at positions 41 and 44 are disulfide-linked.

Functionally, required for production of the bacteriocin SkfA. The polypeptide is Thioredoxin-like protein SkfH (Bacillus subtilis (strain 168)).